We begin with the raw amino-acid sequence, 419 residues long: Diaminopimelate decarboxylase (419 aa).

Lysine 56 carries the N6-(pyridoxal phosphate)lysine modification. Pyridoxal 5'-phosphate-binding positions include glycine 234 and 274–277; that span reads EPGR. Arginine 277, arginine 312, and tyrosine 316 together coordinate substrate. The Proton donor role is filled by cysteine 343. Substrate is bound by residues glutamate 344 and tyrosine 372. Tyrosine 372 contacts pyridoxal 5'-phosphate.

The protein belongs to the Orn/Lys/Arg decarboxylase class-II family. LysA subfamily. In terms of assembly, homodimer. Pyridoxal 5'-phosphate is required as a cofactor.

It catalyses the reaction meso-2,6-diaminopimelate + H(+) = L-lysine + CO2. It functions in the pathway amino-acid biosynthesis; L-lysine biosynthesis via DAP pathway; L-lysine from DL-2,6-diaminopimelate: step 1/1. Its function is as follows. Specifically catalyzes the decarboxylation of meso-diaminopimelate (meso-DAP) to L-lysine. The polypeptide is Diaminopimelate decarboxylase (Archaeoglobus fulgidus (strain ATCC 49558 / DSM 4304 / JCM 9628 / NBRC 100126 / VC-16)).